The sequence spans 229 residues: PKHD-type hydroxylase BRADO4652 (229 aa).

Positions 78–180 constitute a Fe2OG dioxygenase domain; it reads QIFPPLFNRY…RVASFFWMQS (103 aa). Residues His98, Asp100, and His161 each coordinate Fe cation. Arg171 contacts 2-oxoglutarate.

It depends on Fe(2+) as a cofactor. The cofactor is L-ascorbate.

In Bradyrhizobium sp. (strain ORS 278), this protein is PKHD-type hydroxylase BRADO4652.